Reading from the N-terminus, the 448-residue chain is DNA primase DnaG (448 aa).

The 75-residue stretch at Asp-186–Pro-260 folds into the Toprim domain. Mg(2+)-binding residues include Glu-192, Asp-234, and Asp-236. Positions Ala-318–Gln-340 are disordered. Residues Pro-329 to Gln-338 show a composition bias toward basic and acidic residues.

The protein belongs to the archaeal DnaG primase family. In terms of assembly, forms a ternary complex with MCM helicase and DNA. Component of the archaeal exosome complex. Mg(2+) is required as a cofactor.

It catalyses the reaction ssDNA + n NTP = ssDNA/pppN(pN)n-1 hybrid + (n-1) diphosphate.. RNA polymerase that catalyzes the synthesis of short RNA molecules used as primers for DNA polymerase during DNA replication. Also part of the exosome, which is a complex involved in RNA degradation. Acts as a poly(A)-binding protein that enhances the interaction between heteromeric, adenine-rich transcripts and the exosome. The protein is DNA primase DnaG of Thermoplasma acidophilum (strain ATCC 25905 / DSM 1728 / JCM 9062 / NBRC 15155 / AMRC-C165).